The chain runs to 122 residues: Ribosome-binding factor A (122 aa).

This sequence belongs to the RbfA family. As to quaternary structure, monomer. Binds 30S ribosomal subunits, but not 50S ribosomal subunits or 70S ribosomes.

It is found in the cytoplasm. One of several proteins that assist in the late maturation steps of the functional core of the 30S ribosomal subunit. Associates with free 30S ribosomal subunits (but not with 30S subunits that are part of 70S ribosomes or polysomes). Required for efficient processing of 16S rRNA. May interact with the 5'-terminal helix region of 16S rRNA. In Albidiferax ferrireducens (strain ATCC BAA-621 / DSM 15236 / T118) (Rhodoferax ferrireducens), this protein is Ribosome-binding factor A.